The primary structure comprises 265 residues: Very long chain fatty acid elongase 6 (265 aa).

Residue Asn2 is glycosylated (N-linked (GlcNAc...) asparagine). Helical transmembrane passes span 34-51, 70-90, 111-131, 136-156, 159-179, 197-217, and 232-252; these read FLFSALYAAFIFGGRHLM, LAVFSIFGALRTGAYMVYILM, FWAYAFVLSKAPELGDTIFII, KLIFLHWYHHITVLLYSWYSY, MVAGGGWFMTMNYGVHAVMYS, FITLSQITQMLMGCVVNYLVF, and IFWSSLMYLSYLVLFCHFFFE.

It belongs to the ELO family. ELOVL6 subfamily. In terms of processing, N-Glycosylated. In terms of tissue distribution, ubiquitous.

It is found in the endoplasmic reticulum membrane. The catalysed reaction is a very-long-chain acyl-CoA + malonyl-CoA + H(+) = a very-long-chain 3-oxoacyl-CoA + CO2 + CoA. It carries out the reaction hexadecanoyl-CoA + malonyl-CoA + H(+) = 3-oxooctadecanoyl-CoA + CO2 + CoA. The enzyme catalyses (9Z)-hexadecenoyl-CoA + malonyl-CoA + H(+) = 3-oxo-(11Z)-octadecenoyl-CoA + CO2 + CoA. It catalyses the reaction dodecanoyl-CoA + malonyl-CoA + H(+) = 3-oxotetradecanoyl-CoA + CO2 + CoA. The catalysed reaction is tetradecanoyl-CoA + malonyl-CoA + H(+) = 3-oxohexadecanoyl-CoA + CO2 + CoA. It carries out the reaction (9Z)-octadecenoyl-CoA + malonyl-CoA + H(+) = 3-oxo-(11Z)-eicosenoyl-CoA + CO2 + CoA. The enzyme catalyses (9Z,12Z)-octadecadienoyl-CoA + malonyl-CoA + H(+) = (11Z,14Z)-3-oxoicosa-11,14-dienoyl-CoA + CO2 + CoA. It catalyses the reaction (9Z,12Z,15Z)-octadecatrienoyl-CoA + malonyl-CoA + H(+) = (11Z,14Z,17Z)-3-oxoeicosatrienoyl-CoA + CO2 + CoA. It functions in the pathway lipid metabolism; fatty acid biosynthesis. Its activity is regulated as follows. The reaction is stimulated by the presence of HSD17B12, the enzyme catalyzing the second step of the elongation cycle. Functionally, catalyzes the first and rate-limiting reaction of the four reactions that constitute the long-chain fatty acids elongation cycle. This endoplasmic reticulum-bound enzymatic process allows the addition of 2 carbons to the chain of long- and very long-chain fatty acids (VLCFAs) per cycle. Condensing enzyme that elongates fatty acids with 12, 14 and 16 carbons with higher activity toward C16:0 acyl-CoAs. Catalyzes the synthesis of unsaturated C16 long chain fatty acids and, to a lesser extent, C18:0 and those with low desaturation degree. May participate in the production of saturated and monounsaturated VLCFAs of different chain lengths that are involved in multiple biological processes as precursors of membrane lipids and lipid mediators. The chain is Very long chain fatty acid elongase 6 from Homo sapiens (Human).